Here is a 245-residue protein sequence, read N- to C-terminus: Aliphatic sulfonates import ATP-binding protein SsuB (245 aa).

The ABC transporter domain maps to 6-225 (VTVRGLRRAF…SRGDEGFDDL (220 aa)). An ATP-binding site is contributed by 38–45 (GLSGSGKS).

It belongs to the ABC transporter superfamily. Aliphatic sulfonates importer (TC 3.A.1.17.2) family. In terms of assembly, the complex is composed of two ATP-binding proteins (SsuB), two transmembrane proteins (SsuC) and a solute-binding protein (SsuA).

It localises to the cell membrane. The catalysed reaction is ATP + H2O + aliphatic sulfonate-[sulfonate-binding protein]Side 1 = ADP + phosphate + aliphatic sulfonateSide 2 + [sulfonate-binding protein]Side 1.. Its function is as follows. Part of the ABC transporter complex SsuABC involved in aliphatic sulfonates import. Responsible for energy coupling to the transport system. The protein is Aliphatic sulfonates import ATP-binding protein SsuB of Mycobacterium sp. (strain MCS).